A 273-amino-acid polypeptide reads, in one-letter code: 4-hydroxy-tetrahydrodipicolinate reductase (273 aa).

NAD(+) is bound at residue 11-16; the sequence is GAGGRM. Position 37 (Arg-37) interacts with NADP(+). Residues 100–102 and 124–127 contribute to the NAD(+) site; these read GTT and AANY. The active-site Proton donor/acceptor is the His-157. His-158 lines the (S)-2,3,4,5-tetrahydrodipicolinate pocket. Lys-161 serves as the catalytic Proton donor. 167–168 contributes to the (S)-2,3,4,5-tetrahydrodipicolinate binding site; that stretch reads GT.

Belongs to the DapB family.

Its subcellular location is the cytoplasm. The enzyme catalyses (S)-2,3,4,5-tetrahydrodipicolinate + NAD(+) + H2O = (2S,4S)-4-hydroxy-2,3,4,5-tetrahydrodipicolinate + NADH + H(+). It carries out the reaction (S)-2,3,4,5-tetrahydrodipicolinate + NADP(+) + H2O = (2S,4S)-4-hydroxy-2,3,4,5-tetrahydrodipicolinate + NADPH + H(+). It participates in amino-acid biosynthesis; L-lysine biosynthesis via DAP pathway; (S)-tetrahydrodipicolinate from L-aspartate: step 4/4. Functionally, catalyzes the conversion of 4-hydroxy-tetrahydrodipicolinate (HTPA) to tetrahydrodipicolinate. In Acinetobacter baumannii (strain AB307-0294), this protein is 4-hydroxy-tetrahydrodipicolinate reductase.